The primary structure comprises 173 residues: Superoxide dismutase [Cu-Zn] (173 aa).

The signal sequence occupies residues 1–22; sequence MNKAKTLLFTALAFGLSHQALA. Residues His67, His69, and His92 each coordinate Cu cation. Cys74 and Cys169 are joined by a disulfide. Positions 92, 101, 110, and 113 each coordinate Zn(2+). His147 is a Cu cation binding site.

Belongs to the Cu-Zn superoxide dismutase family. In terms of assembly, homodimer. The cofactor is Cu cation. It depends on Zn(2+) as a cofactor.

The protein resides in the periplasm. The catalysed reaction is 2 superoxide + 2 H(+) = H2O2 + O2. Destroys radicals which are normally produced within the cells and which are toxic to biological systems. The polypeptide is Superoxide dismutase [Cu-Zn] (sodC) (Photobacterium leiognathi).